The primary structure comprises 85 residues: Transcriptional repressor protein KorC (85 aa).

A DNA-binding region (H-T-H motif) is located at residues 28–47 (VLHLAGLTGGQAARILGLGA).

In terms of biological role, acts with KorA as corepressor in the control of the kilC and kilE operons. The protein is Transcriptional repressor protein KorC (korC) of Escherichia coli.